Consider the following 419-residue polypeptide: UDP-N-acetylglucosamine 1-carboxyvinyltransferase 2 (419 aa).

22–23 (KN) contacts phosphoenolpyruvate. Arg-92 contacts UDP-N-acetyl-alpha-D-glucosamine. Cys-116 acts as the Proton donor in catalysis. Cys-116 carries the post-translational modification 2-(S-cysteinyl)pyruvic acid O-phosphothioketal. Residues 121-125 (RPIDL), Asp-306, and Ile-328 contribute to the UDP-N-acetyl-alpha-D-glucosamine site.

Belongs to the EPSP synthase family. MurA subfamily.

The protein resides in the cytoplasm. It carries out the reaction phosphoenolpyruvate + UDP-N-acetyl-alpha-D-glucosamine = UDP-N-acetyl-3-O-(1-carboxyvinyl)-alpha-D-glucosamine + phosphate. It functions in the pathway cell wall biogenesis; peptidoglycan biosynthesis. Cell wall formation. Adds enolpyruvyl to UDP-N-acetylglucosamine. This Streptococcus pyogenes serotype M1 protein is UDP-N-acetylglucosamine 1-carboxyvinyltransferase 2.